Reading from the N-terminus, the 134-residue chain is Large ribosomal subunit protein uL22 (134 aa).

The protein belongs to the universal ribosomal protein uL22 family. As to quaternary structure, part of the 50S ribosomal subunit.

Its function is as follows. This protein binds specifically to 23S rRNA; its binding is stimulated by other ribosomal proteins, e.g. L4, L17, and L20. It is important during the early stages of 50S assembly. It makes multiple contacts with different domains of the 23S rRNA in the assembled 50S subunit and ribosome. The globular domain of the protein is located near the polypeptide exit tunnel on the outside of the subunit, while an extended beta-hairpin is found that lines the wall of the exit tunnel in the center of the 70S ribosome. This Porphyromonas gingivalis (strain ATCC 33277 / DSM 20709 / CIP 103683 / JCM 12257 / NCTC 11834 / 2561) protein is Large ribosomal subunit protein uL22.